A 165-amino-acid chain; its full sequence is V-type proton ATPase 16 kDa proteolipid subunit (165 aa).

Residues 1-10 (MSSTFSGDET) lie on the Lumenal side of the membrane. The chain crosses the membrane as a helical span at residues 11–33 (APFFGFLGAAAALVFSCMGAAYG). At 34-55 (TAKSGVGVASMGVMRPELVMKS) the chain is on the cytoplasmic side. Residues 56 to 76 (IVPVVMAGVLGIYGLIIAVII) form a helical membrane-spanning segment. The Lumenal portion of the chain corresponds to 77–95 (STGINPKAKSYYLFDGYAH). A helical membrane pass occupies residues 96 to 117 (LSSGLACGLAGLSAGMAIGIVG). The Cytoplasmic portion of the chain corresponds to 118 to 129 (DAGVRANAQQPK). The chain crosses the membrane as a helical span at residues 130 to 155 (LFVGMILILIFAEALALYGLIVGIIL). The Lumenal portion of the chain corresponds to 156-165 (SSRAGQSRAE).

This sequence belongs to the V-ATPase proteolipid subunit family. As to quaternary structure, V-ATPase is a heteromultimeric enzyme composed of a peripheral catalytic V1 complex (main components: subunits A, B, C, D, E, and F) attached to an integral membrane V0 proton pore complex (main component: the proteolipid protein; which is present as a hexamer that forms the proton-conducting pore).

Its subcellular location is the vacuole membrane. In terms of biological role, proton-conducting pore forming subunit of the membrane integral V0 complex of vacuolar ATPase. V-ATPase is responsible for acidifying a variety of intracellular compartments in eukaryotic cells. This is V-type proton ATPase 16 kDa proteolipid subunit (CVA16-2) from Gossypium hirsutum (Upland cotton).